A 55-amino-acid chain; its full sequence is Small ribosomal subunit protein bS21 (55 aa).

It belongs to the bacterial ribosomal protein bS21 family.

This is Small ribosomal subunit protein bS21 from Phytoplasma mali (strain AT).